The chain runs to 133 residues: MMLNSDTMELDLPPTHSETESGFSDCGGGPGPDGAGSGDPGVVQVRSSELGESGRKDLQHLSREERRRRRRATAKYRTAHATRERIRVEAFNLAFAELRKLLPTLPPDKKLSKIEILRLAICYISYLNHVLDV.

The segment at 1 to 78 (MMLNSDTMEL…RRRATAKYRT (78 aa)) is disordered. Positions 25 to 39 (DCGGGPGPDGAGSGD) are enriched in gly residues. Basic and acidic residues predominate over residues 52–65 (ESGRKDLQHLSREE). A compositionally biased stretch (basic residues) spans 66 to 78 (RRRRRRATAKYRT). Positions 75-127 (KYRTAHATRERIRVEAFNLAFAELRKLLPTLPPDKKLSKIEILRLAICYISYL) constitute a bHLH domain.

As to quaternary structure, efficient DNA binding requires dimerization with another bHLH protein.

It localises to the nucleus. Functionally, may serve as DNA-binding protein and may be involved in the control of cell-type determination, possibly within the developing nervous system. This is Helix-loop-helix protein 1 (Nhlh1) from Mus musculus (Mouse).